The primary structure comprises 133 residues: ATP synthase epsilon chain, chloroplastic (133 aa).

The protein belongs to the ATPase epsilon chain family. In terms of assembly, F-type ATPases have 2 components, CF(1) - the catalytic core - and CF(0) - the membrane proton channel. CF(1) has five subunits: alpha(3), beta(3), gamma(1), delta(1), epsilon(1). CF(0) has three main subunits: a, b and c.

Its subcellular location is the plastid. The protein localises to the chloroplast thylakoid membrane. Functionally, produces ATP from ADP in the presence of a proton gradient across the membrane. The sequence is that of ATP synthase epsilon chain, chloroplastic from Lotus japonicus (Lotus corniculatus var. japonicus).